Consider the following 347-residue polypeptide: NADH-ubiquinone oxidoreductase chain 2 (347 aa).

A run of 10 helical transmembrane segments spans residues Pro-3–Ser-23, His-25–Met-45, Tyr-59–Met-79, Phe-111–Leu-131, Ile-149–Gly-169, Ile-178–Pro-198, Thr-201–Leu-221, Ser-242–Pro-262, Asn-274–Leu-294, and Leu-325–Ile-345.

It belongs to the complex I subunit 2 family. In terms of assembly, core subunit of respiratory chain NADH dehydrogenase (Complex I) which is composed of 45 different subunits. Interacts with TMEM242.

The protein localises to the mitochondrion inner membrane. It catalyses the reaction a ubiquinone + NADH + 5 H(+)(in) = a ubiquinol + NAD(+) + 4 H(+)(out). Core subunit of the mitochondrial membrane respiratory chain NADH dehydrogenase (Complex I) which catalyzes electron transfer from NADH through the respiratory chain, using ubiquinone as an electron acceptor. Essential for the catalytic activity and assembly of complex I. In Rhinoceros unicornis (Greater Indian rhinoceros), this protein is NADH-ubiquinone oxidoreductase chain 2.